Reading from the N-terminus, the 209-residue chain is Small ribosomal subunit protein uS3c (209 aa).

Residues 39–109 (IRSCIEKQLH…QIRINLIEIT (71 aa)) enclose the KH type-2 domain.

The protein belongs to the universal ribosomal protein uS3 family. Part of the 30S ribosomal subunit.

The protein localises to the plastid. Its subcellular location is the chloroplast. The sequence is that of Small ribosomal subunit protein uS3c (rps3) from Gracilaria tenuistipitata (Red alga).